The sequence spans 1650 residues: Transmembrane domain-containing protein DDB_G0287209 (1650 aa).

Residues 194–225 (NNNNNNFNNNNNNNNNNNNNKNNYNNNKSNLI) are a coiled coil. Disordered stretches follow at residues 197–216 (NNNFNNNNNNNNNNNNNKNN) and 1218–1296 (ENQF…NINN). Positions 1224–1284 (NNNENSGSSG…SNSNENNYNG (61 aa)) are enriched in low complexity. 9 helical membrane passes run 1314 to 1334 (PLLLIPFIFWILFFGLFLSLF), 1347 to 1369 (ILFLQLNSIVFYPLPNIYGLQLF), 1390 to 1410 (ISISLISIFLIYLIGISDVTS), 1454 to 1474 (WNIYLMLIQPLFHCLISLIVP), 1489 to 1509 (ILFISTPIQIVFFFSSIVILF), 1515 to 1535 (WWDLIFVFKTILFTSLSVTLL), 1539 to 1559 (PVYFSALVICQIVYSYSQFAF), 1570 to 1590 (VENLLNLFQLSILIVINTSII), and 1595 to 1615 (FNLIGILFTIVIFSCSLITII).

The protein resides in the membrane. The chain is Transmembrane domain-containing protein DDB_G0287209 from Dictyostelium discoideum (Social amoeba).